A 169-amino-acid polypeptide reads, in one-letter code: Centrosomal protein 20 (169 aa).

Residues 1–104 (MATVGDLKAV…VVEDLNSQSV (104 aa)) are necessary and sufficient for homooligomerization and localization to centrosomes and pericentriolar satellites. The LisH domain maps to 49-81 (ENLLINELIREYLAFNKYSYTSSVLTAETGLSE). The interval 135–169 (TFRNIPRGRNTKDTHSGPVQLTQTSTEDWHQRRHR) is disordered. Residues 151 to 160 (GPVQLTQTST) are compositionally biased toward polar residues.

It belongs to the CEP43 family. In terms of assembly, homooligomer; probably required for localization to centrosomes.

Its subcellular location is the cell projection. The protein resides in the cilium. It is found in the cytoplasm. It localises to the cytoskeleton. The protein localises to the cilium basal body. Its subcellular location is the microtubule organizing center. The protein resides in the centrosome. It is found in the cytoplasmic granule. It localises to the centriolar satellite. Functionally, involved in the biogenesis of cilia. Required for the recruitment of PLK1 to centrosomes and S phase progression. This Xenopus laevis (African clawed frog) protein is Centrosomal protein 20 (Cep20).